The chain runs to 434 residues: Aspartate--tRNA(Asp/Asn) ligase (434 aa).

Glu167 is an L-aspartate binding site. The segment at 189–192 is aspartate; it reads QLFK. L-aspartate is bound at residue Arg211. Residues 211-213, 219-221, and Glu357 each bind ATP; these read RAE and RHL. Residues Glu357 and Ser360 each contribute to the Mg(2+) site. Positions 360 and 364 each coordinate L-aspartate. Residue 405 to 408 coordinates ATP; that stretch reads GGER.

Belongs to the class-II aminoacyl-tRNA synthetase family. Type 2 subfamily. Homodimer. The cofactor is Mg(2+).

It localises to the cytoplasm. It carries out the reaction tRNA(Asx) + L-aspartate + ATP = L-aspartyl-tRNA(Asx) + AMP + diphosphate. Its function is as follows. Aspartyl-tRNA synthetase with relaxed tRNA specificity since it is able to aspartylate not only its cognate tRNA(Asp) but also tRNA(Asn). Reaction proceeds in two steps: L-aspartate is first activated by ATP to form Asp-AMP and then transferred to the acceptor end of tRNA(Asp/Asn). This Haloquadratum walsbyi (strain DSM 16790 / HBSQ001) protein is Aspartate--tRNA(Asp/Asn) ligase.